Consider the following 434-residue polypeptide: Gamma-enolase (434 aa).

Residue serine 2 is modified to N-acetylserine. At lysine 5 the chain carries N6-acetyllysine. Residue threonine 26 is modified to Phosphothreonine. A Mg(2+)-binding site is contributed by serine 40. Phosphotyrosine is present on tyrosine 44. Lysine 60 is modified (N6-acetyllysine; alternate). Position 60 is an N6-succinyllysine; alternate (lysine 60). Lysine 64 bears the N6-acetyllysine mark. N6-acetyllysine; alternate is present on lysine 89. The residue at position 89 (lysine 89) is an N6-succinyllysine; alternate. Positions 158 and 167 each coordinate substrate. An N6-acetyllysine mark is found at lysine 193, lysine 197, and lysine 199. Lysine 202 carries the post-translational modification N6-acetyllysine; alternate. Residue lysine 202 forms a Glycyl lysine isopeptide (Lys-Gly) (interchain with G-Cter in SUMO2); alternate linkage. Glutamate 210 acts as the Proton donor in catalysis. N6-acetyllysine; alternate is present on residues lysine 228 and lysine 233. The residue at position 228 (lysine 228) is an N6-succinyllysine; alternate. At lysine 233 the chain carries N6-(2-hydroxyisobutyryl)lysine; alternate. Mg(2+) is bound at residue aspartate 245. At lysine 256 the chain carries N6-acetyllysine. Serine 263 is subject to Phosphoserine. Position 287 is a phosphotyrosine (tyrosine 287). Serine 291 carries the phosphoserine modification. Mg(2+) contacts are provided by glutamate 293 and aspartate 318. Glutamate 293 and aspartate 318 together coordinate substrate. N6-acetyllysine occurs at positions 335 and 343. Residue lysine 343 is the Proton acceptor of the active site. Substrate is bound by residues 370–373 (SHRS) and lysine 394. Position 406 is an N6-acetyllysine (lysine 406).

It belongs to the enolase family. As to quaternary structure, mammalian enolase is composed of 3 isozyme subunits, alpha, beta and gamma, which can form homodimers or heterodimers which are cell-type and development-specific. Mg(2+) is required as a cofactor. In terms of tissue distribution, skeletal muscle (at protein level). The alpha/alpha homodimer is expressed in embryo and in most adult tissues. The alpha/beta heterodimer and the beta/beta homodimer are found in striated muscle, and the alpha/gamma heterodimer and the gamma/gamma homodimer in neurons.

The protein resides in the cytoplasm. It localises to the cell membrane. It catalyses the reaction (2R)-2-phosphoglycerate = phosphoenolpyruvate + H2O. Its pathway is carbohydrate degradation; glycolysis; pyruvate from D-glyceraldehyde 3-phosphate: step 4/5. Functionally, has neurotrophic and neuroprotective properties on a broad spectrum of central nervous system (CNS) neurons. Binds, in a calcium-dependent manner, to cultured neocortical neurons and promotes cell survival. This Mus musculus (Mouse) protein is Gamma-enolase (Eno2).